The following is a 364-amino-acid chain: MASPNPYSYSPQLPQREESPYQEDQYQSSPSFRSTPFRSSRGTGAGTGIGLGLSSGFTSSLRGGAGGPSEPRSGDGSHDDLPQRSSSSSTVIPSLPPKPKPSSIPETLWSLQIPLHITHQSHPKTPYICSVPRFSYLALLLPRLTAYYGTPCSSFHHEEVHLRNFAVGLLVDLYQPSELPWRLTVADGMEWDICDTFMNSAKEADFIRNGNAKRIMGLSKEHTTALWNAVQDNDYQAFTKINTHLLNAPTALKNVPIRIYIPSSPSPPSSDQQQPQRPGGSSSSGSYRVMQTLVPPRGPNNRTPQTLGQALKSLLPALFPSSRDPVLASVILHGAPVPFSAPLEELMRDASYPDGWLCLIVVLL.

Polar residues predominate over residues 1 to 13; sequence MASPNPYSYSPQL. A disordered region spans residues 1-103; sequence MASPNPYSYS…SLPPKPKPSS (103 aa). Over residues 28 to 42 the composition is skewed to low complexity; it reads SSPSFRSTPFRSSRG. Over residues 43-53 the composition is skewed to gly residues; it reads TGAGTGIGLGL. Basic and acidic residues predominate over residues 72-82; that stretch reads RSGDGSHDDLP. Lys202 is covalently cross-linked (Glycyl lysine isopeptide (Lys-Gly) (interchain with G-Cter in ATG12)). The tract at residues 262–306 is disordered; it reads PSSPSPPSSDQQQPQRPGGSSSSGSYRVMQTLVPPRGPNNRTPQT. The segment covering 269–286 has biased composition (low complexity); sequence SSDQQQPQRPGGSSSSGS.

Belongs to the ATG5 family. Conjugated with atg12. Conjugated to atg12; which is essential for autophagy.

The protein localises to the preautophagosomal structure membrane. In terms of biological role, involved in cytoplasm to vacuole transport (Cvt) and autophagic vesicle formation. Autophagy is essential for maintenance of amino acid levels and protein synthesis under nitrogen starvation. Required for selective autophagic degradation of the nucleus (nucleophagy). Also required for mitophagy, which eliminates defective or superfluous mitochondria in order to fulfill cellular energy requirements and prevent excess ROS production. Conjugation with atg12, through a ubiquitin-like conjugating system involving apg-5/atg7 as an E1-like activating enzyme and atg10 as an E2-like conjugating enzyme, is essential for its function. The atg12-apg-4/atg5 conjugate acts as an E3-like enzyme which is required for lipidation of apg-6/atg8 and apg-6/atg8 association to the vesicle membranes. This Neurospora crassa (strain ATCC 24698 / 74-OR23-1A / CBS 708.71 / DSM 1257 / FGSC 987) protein is Autophagy-related protein 5 (apg-4).